The primary structure comprises 392 residues: Queuine tRNA-ribosyltransferase (392 aa).

D93 functions as the Proton acceptor in the catalytic mechanism. Substrate-binding positions include 93-97, D147, Q189, and G216; that span reads DSGGY. Positions 247–253 are RNA binding; sequence GVGAPED. D266 acts as the Nucleophile in catalysis. The tract at residues 271–275 is RNA binding; important for wobble base 34 recognition; it reads TRVAR. Zn(2+) contacts are provided by C304, C306, C309, and H335.

The protein belongs to the queuine tRNA-ribosyltransferase family. Homodimer. Within each dimer, one monomer is responsible for RNA recognition and catalysis, while the other monomer binds to the replacement base PreQ1. The cofactor is Zn(2+).

The catalysed reaction is 7-aminomethyl-7-carbaguanine + guanosine(34) in tRNA = 7-aminomethyl-7-carbaguanosine(34) in tRNA + guanine. Its pathway is tRNA modification; tRNA-queuosine biosynthesis. In terms of biological role, catalyzes the base-exchange of a guanine (G) residue with the queuine precursor 7-aminomethyl-7-deazaguanine (PreQ1) at position 34 (anticodon wobble position) in tRNAs with GU(N) anticodons (tRNA-Asp, -Asn, -His and -Tyr). Catalysis occurs through a double-displacement mechanism. The nucleophile active site attacks the C1' of nucleotide 34 to detach the guanine base from the RNA, forming a covalent enzyme-RNA intermediate. The proton acceptor active site deprotonates the incoming PreQ1, allowing a nucleophilic attack on the C1' of the ribose to form the product. After dissociation, two additional enzymatic reactions on the tRNA convert PreQ1 to queuine (Q), resulting in the hypermodified nucleoside queuosine (7-(((4,5-cis-dihydroxy-2-cyclopenten-1-yl)amino)methyl)-7-deazaguanosine). The chain is Queuine tRNA-ribosyltransferase from Dehalococcoides mccartyi (strain ATCC BAA-2266 / KCTC 15142 / 195) (Dehalococcoides ethenogenes (strain 195)).